We begin with the raw amino-acid sequence, 165 residues long: Cytochrome c-550-like protein (165 aa).

The N-terminal stretch at 1–30 is a signal peptide; it reads MLNKSLLIRFVLTILIIVQVIIFDTQPVQA. Cysteine 75, cysteine 78, histidine 79, and cysteine 129 together coordinate heme c.

The protein belongs to the cytochrome c family. PsbV subfamily. Requires heme c as cofactor.

Its subcellular location is the cellular thylakoid membrane. Possible low-potential cytochrome c. The sequence is that of Cytochrome c-550-like protein (psbV2) from Trichodesmium erythraeum (strain IMS101).